Consider the following 35-residue polypeptide: MRVAKIGVIALFLLMAIGGIGGVMLAGYSFILRAG.

A helical transmembrane segment spans residues 6–26 (IGVIALFLLMAIGGIGGVMLA).

It belongs to the UPF0387 family.

Its subcellular location is the cell inner membrane. The sequence is that of UPF0387 membrane protein YohO from Salmonella paratyphi A (strain ATCC 9150 / SARB42).